Here is a 95-residue protein sequence, read N- to C-terminus: Small ribosomal subunit protein uS19 (95 aa).

Residues 75 to 95 (APTRSFRGHGGKKADKRGKMK) are disordered. Positions 80–95 (FRGHGGKKADKRGKMK) are enriched in basic residues.

This sequence belongs to the universal ribosomal protein uS19 family.

Functionally, protein S19 forms a complex with S13 that binds strongly to the 16S ribosomal RNA. The polypeptide is Small ribosomal subunit protein uS19 (Roseiflexus sp. (strain RS-1)).